Consider the following 137-residue polypeptide: Peptide methionine sulfoxide reductase MsrB (137 aa).

The MsrB domain occupies 7–129; that stretch reads AEELKKNLSE…NSASLRFTDG (123 aa). Zn(2+) contacts are provided by Cys46, Cys49, Cys95, and Cys98. Cys118 (nucleophile) is an active-site residue.

This sequence belongs to the MsrB Met sulfoxide reductase family. It depends on Zn(2+) as a cofactor.

The enzyme catalyses L-methionyl-[protein] + [thioredoxin]-disulfide + H2O = L-methionyl-(R)-S-oxide-[protein] + [thioredoxin]-dithiol. This Escherichia coli O8 (strain IAI1) protein is Peptide methionine sulfoxide reductase MsrB.